The chain runs to 76 residues: HEHSSDESSESSKPCCDLCTCTKSIPPQCHCNDMRLNSCHSACKSCICALSEPAQCFCVDTTDFCYKSCHNNAEKD.

7 disulfide bridges follow: C15–C69, C16–C31, C19–C65, C21–C29, C39–C46, C43–C58, and C48–C56.

It belongs to the Bowman-Birk serine protease inhibitor family.

This is Bowman-Birk type proteinase inhibitor DE-4 from Macrotyloma axillare (Perennial horse gram).